The primary structure comprises 61 residues: uncharacterized protein (61 aa).

This is an uncharacterized protein from Haemophilus influenzae (strain ATCC 51907 / DSM 11121 / KW20 / Rd).